A 1180-amino-acid chain; its full sequence is Polyamine-transporting ATPase 13A2 (1180 aa).

Topologically, residues 1–44 (MSADSSPLVGSTPTGYGTLTIGTSIDPLSSSVSSVRLSGYCGSP) are cytoplasmic. The stretch at 45–65 (WRVIGYHVVVWMMAGIPLLLF) is an intramembrane region. The Cytoplasmic segment spans residues 66–235 (RWKPLWGVRL…KSYPQLLVDE (170 aa)). Serine 151 bears the Phosphoserine mark. A helical membrane pass occupies residues 236-253 (ALNPYYGFQAFSIALWLA). At 254-256 (DHY) the chain is on the lumenal side. A helical transmembrane segment spans residues 257 to 276 (YWYALCIFLISSISICLSLY). The Cytoplasmic portion of the chain corresponds to 277–427 (KTRKQSQTLR…NFKFYKHSMK (151 aa)). The chain crosses the membrane as a helical span at residues 428–448 (FVAALSVLALLGTIYSIFILY). The Lumenal segment spans residues 449–463 (RNRVPLNEIVIRALD). The helical transmembrane segment at 464-484 (LVTVVVPPALPAAMTVCTLYA) threads the bilayer. Over 485–930 (QSRLRRQGIF…REGRCSLDTS (446 aa)) the chain is Cytoplasmic. The 4-aspartylphosphate intermediate role is filled by aspartate 513. Mg(2+)-binding residues include aspartate 878 and aspartate 882. Residues 931–951 (FSVFKYMALYSLTQFISVLIL) form a helical membrane-spanning segment. At 952–957 (YTINTN) the chain is on the lumenal side. The chain crosses the membrane as a helical span at residues 958–978 (LGDLQFLAIDLVITTTVAVLM). Residues 979 to 994 (SRTGPALVLGRVRPPG) lie on the Cytoplasmic side of the membrane. Residues 995–1015 (ALLSVPVLSSLLLQMVLVTGV) traverse the membrane as a helical segment. Residues 1016-1048 (QLGGYFLTLAQPWFVPLNRTVAAPDNLPNYENT) lie on the Lumenal side of the membrane. Asparagine 1033 is a glycosylation site (N-linked (GlcNAc...) asparagine). A helical membrane pass occupies residues 1049–1069 (VVFSLSSFQYLILAAAVSKGA). Over 1070–1080 (PFRRPLYTNVP) the chain is Cytoplasmic. Residues 1081–1101 (FLVALALLSSVLVGLVLVPGL) traverse the membrane as a helical segment. The Lumenal portion of the chain corresponds to 1102 to 1117 (LQGPLALRNITDTGFK). Asparagine 1110 carries N-linked (GlcNAc...) asparagine glycosylation. Residues 1118-1138 (LLLLGLVTLNFVGAFMLESVL) traverse the membrane as a helical segment. At 1139–1180 (DQCLPACLRRLRPKRASKKRFKQLERELAEQPWPPLPAGPLR) the chain is on the cytoplasmic side.

This sequence belongs to the cation transport ATPase (P-type) (TC 3.A.3) family. Type V subfamily. In terms of assembly, interacts with MYCBP2; the interaction inhibits the ubiquitination of TSC2 by MYCBP2. Interacts with HDAC6; the interaction results in recruitment of HDAC6 to lysosomes to promote CTTN deacetylation. Autophosphorylated. Accumulates in an inactive autophosphorylated state and autophosphorylation is stimulated by phosphatidic acid and phosphatidylinositol 3,5-bisphosphate but not by Mn(2+) or Zn(2+). The presence of spermine results in a dose-dependent reduction in autophosphorylation. Expressed in brain; protein levels are markedly increased in brain from subjects with Parkinson disease and subjects with dementia with Lewy bodies. Detected in pyramidal neurons located throughout the cingulate cortex (at protein level). In the substantia nigra, it is found in neuromelanin-positive dopaminergic neurons (at protein level).

Its subcellular location is the lysosome membrane. It is found in the late endosome membrane. It localises to the endosome. The protein resides in the multivesicular body membrane. The protein localises to the cytoplasmic vesicle. Its subcellular location is the autophagosome membrane. It carries out the reaction spermidine(out) + ATP + H2O = spermidine(in) + ADP + phosphate + H(+). The catalysed reaction is spermine(out) + ATP + H2O = spermine(in) + ADP + phosphate + H(+). Accumulates in an inactive autophosphorylated state. The presence of spermine results in a dose-dependent reduction in autophosphorylation. Functionally, ATPase which acts as a lysosomal polyamine exporter with high affinity for spermine. Also stimulates cellular uptake of polyamines and protects against polyamine toxicity. Plays a role in intracellular cation homeostasis and the maintenance of neuronal integrity. Contributes to cellular zinc homeostasis. Confers cellular protection against Mn(2+) and Zn(2+) toxicity and mitochondrial stress. Required for proper lysosomal and mitochondrial maintenance. Regulates the autophagy-lysosome pathway through the control of SYT11 expression at both transcriptional and post-translational levels. Facilitates recruitment of deacetylase HDAC6 to lysosomes to deacetylate CTTN, leading to actin polymerization, promotion of autophagosome-lysosome fusion and completion of autophagy. Promotes secretion of exosomes as well as secretion of SCNA via exosomes. Plays a role in lipid homeostasis. This is Polyamine-transporting ATPase 13A2 from Homo sapiens (Human).